A 419-amino-acid polypeptide reads, in one-letter code: Erythromycin esterase type II (419 aa).

Functionally, this enzyme confers resistance to erythromycin through inactivation by hydrolyzing the lactone ring of the antibiotic. In Escherichia coli, this protein is Erythromycin esterase type II (ereB).